A 305-amino-acid polypeptide reads, in one-letter code: MRSNSVNIETFKDMLKRYEDFKMKNKREPRVIFIRSGGGESIPLETFRDMVRRYNNFKDRYGREPRIVYVTPPEPPVPEVNENTPEYVSITQFKDMLSRYNRFKEVNGREPRVVFIYSGGGPSVSLETFKDMCKRYNQFLEENRREPRIVYVTPPEPPVPEEVREMRRVLGEFKTATQLYTLVSRRCKYKFYYNDQTPNREALKKMVTDGINCTDACQLFKPVIEGLGYSVRIEHVKVRCNDNKWYGHYFLRVAGKELASVSLPSERWTVWDYVSATKTGRPLGAPCCSRGIQHLGWGIVSPKHD.

Pseudomurein-binding repeat stretches follow at residues 3 to 34 (SNSV…VIFI), 39 to 70 (GESI…IVYV), 87 to 116 (YVSI…VVFI), and 121 to 152 (GPSV…IVYV). Residues cysteine 213, histidine 248, and aspartate 272 contribute to the active site.

Belongs to the Psimunavirus Pseudomurein endoisopeptidase family. As to quaternary structure, monomer. It depends on Ca(2+) as a cofactor.

Cysteine protease that cleaves the cell wall of its host methanogen under hydrogen limitation of the latter (autolysis). Cleaves the epsilon-Ala-Lys isopeptide bond in the oligopeptides of pseudomurein. This is Pseudomurein endoisopeptidase (peiP) from Methanobacterium phage psiM2 (PsiM2).